We begin with the raw amino-acid sequence, 400 residues long: Exodeoxyribonuclease 7 large subunit (400 aa).

This sequence belongs to the XseA family. Heterooligomer composed of large and small subunits.

It is found in the cytoplasm. It carries out the reaction Exonucleolytic cleavage in either 5'- to 3'- or 3'- to 5'-direction to yield nucleoside 5'-phosphates.. Bidirectionally degrades single-stranded DNA into large acid-insoluble oligonucleotides, which are then degraded further into small acid-soluble oligonucleotides. The chain is Exodeoxyribonuclease 7 large subunit from Clostridium kluyveri (strain NBRC 12016).